We begin with the raw amino-acid sequence, 426 residues long: MSLIKDIKARQVIDSRGNPTVEADVILDDGSKGRGISPSGASTGSREAIELRDGDKSKFGGKGVLKAVNNINTEIRDLLIGKEATDQAAIDNAMIALDGTDNKARLGANAILAVSIAVAQAAAQSKGLPLYAYLKTDDYKMPVPMMNIINGGEHADNSVDFQEFMIMPVGAPSMSEAIRYGAEIFHALKKVLHDKGYNTAVGDEGGFAPDLKSNEEAITVILEAIEAAGYKAGEDIMIAMDAASSELYKDGKYFLGSENKTLTSKEMVDLLSDWVTKYPIISIEDGLDESDWDGFKYQTEKDGKRLQIVGDDLFVTNPKILKEGIEKGIANSILIKINQIGTLTETFEAIQMAKDAGYTAVVSHRSGETEDTVIADIAVATGAGQIKTGSLSRTDRIAKYNQLIRIEEELGSKAVYPGKDAFYNLK.

Gln162 serves as a coordination point for (2R)-2-phosphoglycerate. Glu204 (proton donor) is an active-site residue. Positions 241, 284, and 311 each coordinate Mg(2+). Residues Lys336, Arg365, Ser366, and Lys387 each contribute to the (2R)-2-phosphoglycerate site. Catalysis depends on Lys336, which acts as the Proton acceptor.

Belongs to the enolase family. In terms of assembly, component of the RNA degradosome, a multiprotein complex involved in RNA processing and mRNA degradation. The cofactor is Mg(2+).

It localises to the cytoplasm. Its subcellular location is the secreted. The protein resides in the cell surface. It carries out the reaction (2R)-2-phosphoglycerate = phosphoenolpyruvate + H2O. Its pathway is carbohydrate degradation; glycolysis; pyruvate from D-glyceraldehyde 3-phosphate: step 4/5. Catalyzes the reversible conversion of 2-phosphoglycerate (2-PG) into phosphoenolpyruvate (PEP). It is essential for the degradation of carbohydrates via glycolysis. The chain is Enolase from Hydrogenovibrio crunogenus (strain DSM 25203 / XCL-2) (Thiomicrospira crunogena).